A 214-amino-acid chain; its full sequence is Ribonuclease P protein component 3 (214 aa).

Belongs to the eukaryotic/archaeal RNase P protein component 3 family. In terms of assembly, consists of a catalytic RNA component and at least 4-5 protein subunits. Forms a subcomplex with Rnp2 which stimulates the catalytic RNA.

The protein localises to the cytoplasm. The enzyme catalyses Endonucleolytic cleavage of RNA, removing 5'-extranucleotides from tRNA precursor.. Part of ribonuclease P, a protein complex that generates mature tRNA molecules by cleaving their 5'-ends. The RNA is catalytic, but its KM for pre-tRNA is 170-fold decreased in the presence of the 4 known protein subunits (Rnp1-4). The protein subunits also decrease the amount of Mg(2+) needed for activity. The chain is Ribonuclease P protein component 3 from Pyrococcus furiosus (strain ATCC 43587 / DSM 3638 / JCM 8422 / Vc1).